Here is a 320-residue protein sequence, read N- to C-terminus: MPSISVRRLFDDNQYKLQLAWAAGNSGADNRIGVEADKPVLALVGHLNFIHPNQIQVVGLAESEYLNRLESGETGYQFGDLFDISMSLVIVANGLPVSPGLRDYCHKNDIPLLTSKLESPYLMDVLRIYLQRTLAASSVKHGVFLDVFEIGVLITGHSGLGKSELALELISRGHSLIADDAVELFRIGPETLEGRCSPMLRDFLEVRGLGILNIRHIFGETSIRPKKILQLIINLVEADDEYMKQLDRLSIRTETESILNVNVRSVTLPVAVGRNLAVLVEAAVRNYILQLRGKDSTREFLERHQTQLKENEQHNEDRPD.

Catalysis depends on residues His-141 and Lys-162. 156–163 contributes to the ATP binding site; sequence GHSGLGKS. Ser-163 lines the Mg(2+) pocket. Asp-180 (proton acceptor; for phosphorylation activity. Proton donor; for dephosphorylation activity) is an active-site residue. An important for the catalytic mechanism of both phosphorylation and dephosphorylation region spans residues 204–213; sequence LEVRGLGILN. Glu-205 serves as a coordination point for Mg(2+). The active site involves Arg-248. The segment at 269–274 is important for the catalytic mechanism of dephosphorylation; that stretch reads PVAVGR.

It belongs to the HPrK/P family. As to quaternary structure, homohexamer. It depends on Mg(2+) as a cofactor.

It catalyses the reaction [HPr protein]-L-serine + ATP = [HPr protein]-O-phospho-L-serine + ADP + H(+). The catalysed reaction is [HPr protein]-O-phospho-L-serine + phosphate + H(+) = [HPr protein]-L-serine + diphosphate. Its function is as follows. Catalyzes the ATP- as well as the pyrophosphate-dependent phosphorylation of a specific serine residue in HPr, a phosphocarrier protein of the phosphoenolpyruvate-dependent sugar phosphotransferase system (PTS). HprK/P also catalyzes the pyrophosphate-producing, inorganic phosphate-dependent dephosphorylation (phosphorolysis) of seryl-phosphorylated HPr (P-Ser-HPr). The chain is HPr kinase/phosphorylase from Neisseria meningitidis serogroup B (strain ATCC BAA-335 / MC58).